A 1863-amino-acid chain; its full sequence is Calcineurin-binding protein 1 (1863 aa).

TPR repeat units lie at residues 30-65 (LSQT…ITNS), 81-116 (FLAL…DAKD), and 118-150 (VLWN…SPNN). A disordered region spans residues 315–361 (ERESGGSVKEKEPVFSEEHPQERRSTRLERLRNQKPEKEGLEFDNSK). TPR repeat units follow at residues 543-576 (ARYF…LGRE), 602-637 (IHEI…LAPL), 866-900 (INSP…EKNE), 955-988 (QCFF…DYQT), 990-1009 (EQCV…SSRT), 1011-1031 (LVKL…PPDD), 1143-1183 (FESW…SQRV), 1226-1263 (VPFY…RQDW), 1264-1297 (SHAF…NPSA), 1306-1339 (ASRL…KDTA), 1377-1412 (EGVW…LAQG), and 1508-1541 (NSLR…SMSR). A compositionally biased stretch (basic and acidic residues) spans 894–923 (VHVEKNENNKTESKKDGSEEQVGYREKEQS). The interval 894–941 (VHVEKNENNKTESKKDGSEEQVGYREKEQSEQQSKQIPEHTEEVAEEE) is disordered. The interval 1813–1840 (KMKRGASTSSVVPSVQSGGTSEPEPAPK) is disordered. The span at 1818-1832 (ASTSSVVPSVQSGGT) shows a compositional bias: polar residues.

Component of the HIRA complex made of UBN1, UBN2, ASF1A, CABIN1 and HIRA. In terms of tissue distribution, expressed at low levels in seedlings.

Its subcellular location is the nucleus. In terms of biological role, may be required for replication-independent chromatin assembly. This Arabidopsis thaliana (Mouse-ear cress) protein is Calcineurin-binding protein 1.